Here is an 878-residue protein sequence, read N- to C-terminus: Aconitate hydratase A (878 aa).

Cys426, Cys492, and Cys495 together coordinate [4Fe-4S] cluster.

It belongs to the aconitase/IPM isomerase family. Monomer. It depends on [4Fe-4S] cluster as a cofactor.

The enzyme catalyses citrate = D-threo-isocitrate. It catalyses the reaction (2S,3R)-3-hydroxybutane-1,2,3-tricarboxylate = 2-methyl-cis-aconitate + H2O. Its pathway is carbohydrate metabolism; tricarboxylic acid cycle; isocitrate from oxaloacetate: step 2/2. It participates in organic acid metabolism; propanoate degradation. Functionally, involved in the catabolism of short chain fatty acids (SCFA) via the tricarboxylic acid (TCA)(acetyl degradation route) and probably the 2-methylcitrate cycle I (propionate degradation route). Catalyzes the reversible isomerization of citrate to isocitrate via cis-aconitate. Could catalyze the hydration of 2-methyl-cis-aconitate to yield (2R,3S)-2-methylisocitrate. The apo form of AcnA functions as a RNA-binding regulatory protein. In Rickettsia felis (strain ATCC VR-1525 / URRWXCal2) (Rickettsia azadi), this protein is Aconitate hydratase A (acnA).